The primary structure comprises 303 residues: Proteasome subunit beta (303 aa).

Residues 1–67 constitute a propeptide, removed in mature form; by autocatalysis; that stretch reads MTWQFPDRLS…SGGTGQLPHG (67 aa). Threonine 68 acts as the Nucleophile in catalysis.

It belongs to the peptidase T1B family. In terms of assembly, the 20S proteasome core is composed of 14 alpha and 14 beta subunits that assemble into four stacked heptameric rings, resulting in a barrel-shaped structure. The two inner rings, each composed of seven catalytic beta subunits, are sandwiched by two outer rings, each composed of seven alpha subunits. The catalytic chamber with the active sites is on the inside of the barrel. Has a gated structure, the ends of the cylinder being occluded by the N-termini of the alpha-subunits. Is capped by the proteasome-associated ATPase, ARC.

The protein resides in the cytoplasm. It carries out the reaction Cleavage of peptide bonds with very broad specificity.. It participates in protein degradation; proteasomal Pup-dependent pathway. Its activity is regulated as follows. The formation of the proteasomal ATPase ARC-20S proteasome complex, likely via the docking of the C-termini of ARC into the intersubunit pockets in the alpha-rings, may trigger opening of the gate for substrate entry. Interconversion between the open-gate and close-gate conformations leads to a dynamic regulation of the 20S proteasome proteolysis activity. Its function is as follows. Component of the proteasome core, a large protease complex with broad specificity involved in protein degradation. This chain is Proteasome subunit beta, found in Mycolicibacterium paratuberculosis (strain ATCC BAA-968 / K-10) (Mycobacterium paratuberculosis).